The sequence spans 363 residues: Transcriptional regulator AacuR (363 aa).

The segment at Met-1–Arg-24 is disordered. The segment at residues Cys-27–Cys-54 is a DNA-binding region (zn(2)-C6 fungal-type). Basic residues predominate over residues Arg-63–His-72. A disordered region spans residues Arg-63–Lys-104. Over residues Ile-76 to Ser-102 the composition is skewed to low complexity.

It is found in the nucleus. Its function is as follows. Transcriptional regulator; part of the gene cluster that mediates the biosynthesis of the tetrahydroxanthone dimer secalonic acid D. This is Transcriptional regulator AacuR from Aspergillus aculeatus (strain ATCC 16872 / CBS 172.66 / WB 5094).